The chain runs to 122 residues: Large ribosomal subunit protein uL14 (122 aa).

It belongs to the universal ribosomal protein uL14 family. As to quaternary structure, part of the 50S ribosomal subunit. Forms a cluster with proteins L3 and L19. In the 70S ribosome, L14 and L19 interact and together make contacts with the 16S rRNA in bridges B5 and B8.

Functionally, binds to 23S rRNA. Forms part of two intersubunit bridges in the 70S ribosome. The polypeptide is Large ribosomal subunit protein uL14 (Maricaulis maris (strain MCS10) (Caulobacter maris)).